The following is a 228-amino-acid chain: Urease accessory protein UreF (228 aa).

Belongs to the UreF family. As to quaternary structure, ureD, UreF and UreG form a complex that acts as a GTP-hydrolysis-dependent molecular chaperone, activating the urease apoprotein by helping to assemble the nickel containing metallocenter of UreC. The UreE protein probably delivers the nickel.

It localises to the cytoplasm. Functionally, required for maturation of urease via the functional incorporation of the urease nickel metallocenter. The protein is Urease accessory protein UreF of Prochlorococcus marinus (strain MIT 9301).